Reading from the N-terminus, the 134-residue chain is Small ribosomal subunit protein eS24A (134 aa).

Ser2 carries the post-translational modification N-acetylserine. The interval 100–134 is disordered; that stretch reads IQKVARQQRKQRKNRGKKVFGTGKRLAKRKSKQQD. 2 stretches are compositionally biased toward basic residues: residues 105-117 and 124-134; these read RQQR…RGKK and RLAKRKSKQQD.

Belongs to the eukaryotic ribosomal protein eS24 family. Component of the small ribosomal subunit (SSU). Mature yeast ribosomes consist of a small (40S) and a large (60S) subunit. The 40S small subunit contains 1 molecule of ribosomal RNA (18S rRNA) and at least 33 different proteins. The large 60S subunit contains 3 rRNA molecules (25S, 5.8S and 5S rRNA) and at least 46 different proteins.

The protein resides in the cytoplasm. Component of the ribosome, a large ribonucleoprotein complex responsible for the synthesis of proteins in the cell. The small ribosomal subunit (SSU) binds messenger RNAs (mRNAs) and translates the encoded message by selecting cognate aminoacyl-transfer RNA (tRNA) molecules. The large subunit (LSU) contains the ribosomal catalytic site termed the peptidyl transferase center (PTC), which catalyzes the formation of peptide bonds, thereby polymerizing the amino acids delivered by tRNAs into a polypeptide chain. The nascent polypeptides leave the ribosome through a tunnel in the LSU and interact with protein factors that function in enzymatic processing, targeting, and the membrane insertion of nascent chains at the exit of the ribosomal tunnel. The sequence is that of Small ribosomal subunit protein eS24A (rps2401) from Schizosaccharomyces pombe (strain 972 / ATCC 24843) (Fission yeast).